A 349-amino-acid chain; its full sequence is Hydroxymethylglutaryl-CoA synthase (349 aa).

Asp29 and Ala30 together coordinate (3S)-3-hydroxy-3-methylglutaryl-CoA. The active-site Proton donor/acceptor is the Glu81. Residues Cys113, Thr154, Thr202, and His235 each contribute to the (3S)-3-hydroxy-3-methylglutaryl-CoA site. Cys113 serves as the catalytic Acyl-thioester intermediate. The Proton donor/acceptor role is filled by His235. Residue Arg240 participates in CoA binding. The (3S)-3-hydroxy-3-methylglutaryl-CoA site is built by Arg244, Asn267, and Ser297.

Belongs to the thiolase-like superfamily. Archaeal HMG-CoA synthase family. In terms of assembly, interacts with acetoacetyl-CoA thiolase that catalyzes the precedent step in the pathway and with a DUF35 protein. The acetoacetyl-CoA thiolase/HMG-CoA synthase complex channels the intermediate via a fused CoA-binding site, which allows for efficient coupling of the endergonic thiolase reaction with the exergonic HMGCS reaction.

It catalyses the reaction acetoacetyl-CoA + acetyl-CoA + H2O = (3S)-3-hydroxy-3-methylglutaryl-CoA + CoA + H(+). The protein operates within metabolic intermediate biosynthesis; (R)-mevalonate biosynthesis; (R)-mevalonate from acetyl-CoA: step 2/3. Functionally, catalyzes the condensation of acetyl-CoA with acetoacetyl-CoA to form 3-hydroxy-3-methylglutaryl-CoA (HMG-CoA). Functions in the mevalonate (MVA) pathway leading to isopentenyl diphosphate (IPP), a key precursor for the biosynthesis of isoprenoid compounds that are building blocks of archaeal membrane lipids. The chain is Hydroxymethylglutaryl-CoA synthase from Caldivirga maquilingensis (strain ATCC 700844 / DSM 13496 / JCM 10307 / IC-167).